The chain runs to 49 residues: Beta-toxin Rc1 (49 aa).

Intrachain disulfides connect Cys-15/Cys-31, Cys-22/Cys-40, and Cys-26/Cys-42.

It belongs to the long (4 C-C) scorpion toxin superfamily. Sodium channel inhibitor family. Beta subfamily. In terms of tissue distribution, expressed by the venom gland.

The protein resides in the secreted. Functionally, beta toxins bind voltage-independently at site-4 of sodium channels (Nav) and shift the voltage of activation toward more negative potentials thereby affecting sodium channel activation and promoting spontaneous and repetitive firing. This toxin acts on X.laevis Nav1.6/SCN8A and insect BgNav1 channels, and also displays a small but significant effect on X.laevis Nav1.4/SCN4A channels. In mice induces nociception (licking and lifting behaviors) during the first 15 minutes after injection, and increases the release of TNF-alpha in J774.1 cells. The sequence is that of Beta-toxin Rc1 from Rhopalurus crassicauda (Scorpion).